The primary structure comprises 287 residues: MTPSPLPLSPLRSHIIRELHVQPDIDPGAEVERRVAFLCDYLQSTPTKGFVLGISGGQDSTLAGRLCQLAVERRRSQGHGATFLAVRLPYGVQADEADAQQALDFIQADREVTVNIKEAADASVAAAQAALGSEVRDFVRGNVKARERMVAQYALAGQENLLVVGTDHAAEALTGFYTKYGDGGVDLTPLSGLTKRQGAQLLAHLGAPEGTWRKVPTADLEDDRPGLPDEVALGVTYAQIDAYLEGREVSDEAAARLERLFLNSRHKRALPVTPFDGWWQPGEQKQS.

53-60 provides a ligand contact to ATP; the sequence is GISGGQDS. Asp59 is a Mg(2+) binding site. Arg146 contacts deamido-NAD(+). Residue Thr166 coordinates ATP. Glu171 lines the Mg(2+) pocket. Deamido-NAD(+)-binding residues include Lys179 and Asp186. The ATP site is built by Lys195 and Thr217. 266–267 contributes to the deamido-NAD(+) binding site; sequence HK.

The protein belongs to the NAD synthetase family. As to quaternary structure, homodimer.

The catalysed reaction is deamido-NAD(+) + NH4(+) + ATP = AMP + diphosphate + NAD(+) + H(+). The protein operates within cofactor biosynthesis; NAD(+) biosynthesis; NAD(+) from deamido-NAD(+) (ammonia route): step 1/1. Functionally, catalyzes the ATP-dependent amidation of deamido-NAD to form NAD. Uses ammonia as a nitrogen source. This is NH(3)-dependent NAD(+) synthetase from Deinococcus radiodurans (strain ATCC 13939 / DSM 20539 / JCM 16871 / CCUG 27074 / LMG 4051 / NBRC 15346 / NCIMB 9279 / VKM B-1422 / R1).